Here is a 140-residue protein sequence, read N- to C-terminus: Ubiquitin-like protein ATG12 (140 aa).

Positions 1 to 52 are disordered; sequence MAEEPQTVLQLPPSSAAGGEGLTDVSPETTTPEPPSSAAVSPGTEEPAGDTK. Residues 25–42 show a composition bias toward low complexity; the sequence is VSPETTTPEPPSSAAVSP. A Glycyl lysine isopeptide (Gly-Lys) (interchain with K-? in acceptor protein) cross-link involves residue Gly-140.

Belongs to the ATG12 family. In terms of assembly, forms a conjugate with ATG5. Part of the minor complex composed of 4 sets of ATG12-ATG5 and ATG16L1 (400 kDa); this complex interacts with ATG3 leading to disruption of ATG7 interaction and promotion of ATG8-like proteins lipidation. Forms an 800-kDa complex composed of ATG12-ATG5 and ATG16L2. Interacts with DHX58/RIG-1, IFIH1/MDA5 and MAVS/IPS-1 in monomeric form as well as in ATG12-ATG5 conjugate. The interaction with MAVS is further enhanced upon vesicular stomatitis virus (VSV) infection. Interacts with ATG3; this interaction is essential for phosphatidylethanolamine (PE)-conjugated ATG8-like proteins formation. Interacts with ATG7. Interacts with ATG10. Interacts with TECPR1. Interacts with SH3BGRL. The ATG12-ATG5 conjugate interacts with PDCD6IP (via the BRO1 domain); this interaction is bridged by ATG12 and promotes multiple PDCD6IP-mediated functions such as endolysosomal trafficking, macroautophagy and exosome biogenesis. Post-translationally, acetylated by EP300.

The protein resides in the cytoplasm. It localises to the preautophagosomal structure membrane. In terms of biological role, ubiquitin-like protein involved in autophagy vesicles formation. Conjugation with ATG5 through a ubiquitin-like conjugating system involving also ATG7 as an E1-like activating enzyme and ATG10 as an E2-like conjugating enzyme, is essential for its function. The ATG12-ATG5 conjugate acts as an E3-like enzyme which is required for lipidation of ATG8 family proteins and their association to the vesicle membranes. The ATG12-ATG5 conjugate also negatively regulates the innate antiviral immune response by blocking the type I IFN production pathway through direct association with RARRES3 and MAVS. Also plays a role in translation or delivery of incoming viral RNA to the translation apparatus. As part of the ATG8 conjugation system with ATG5 and ATG16L1, required for recruitment of LRRK2 to stressed lysosomes and induction of LRRK2 kinase activity in response to lysosomal stress. The chain is Ubiquitin-like protein ATG12 from Pongo abelii (Sumatran orangutan).